The primary structure comprises 245 residues: tRNA pseudouridine synthase A (245 aa).

Asp-52 functions as the Nucleophile in the catalytic mechanism. Substrate is bound at residue Tyr-111.

Belongs to the tRNA pseudouridine synthase TruA family. As to quaternary structure, homodimer.

It catalyses the reaction uridine(38/39/40) in tRNA = pseudouridine(38/39/40) in tRNA. Its function is as follows. Formation of pseudouridine at positions 38, 39 and 40 in the anticodon stem and loop of transfer RNAs. The sequence is that of tRNA pseudouridine synthase A from Rhodospirillum centenum (strain ATCC 51521 / SW).